A 477-amino-acid polypeptide reads, in one-letter code: 3-isopropylmalate dehydratase large subunit (477 aa).

The [4Fe-4S] cluster site is built by Cys352, Cys413, and Cys416.

This sequence belongs to the aconitase/IPM isomerase family. LeuC type 1 subfamily. Heterodimer of LeuC and LeuD. The cofactor is [4Fe-4S] cluster.

The enzyme catalyses (2R,3S)-3-isopropylmalate = (2S)-2-isopropylmalate. It functions in the pathway amino-acid biosynthesis; L-leucine biosynthesis; L-leucine from 3-methyl-2-oxobutanoate: step 2/4. Functionally, catalyzes the isomerization between 2-isopropylmalate and 3-isopropylmalate, via the formation of 2-isopropylmaleate. This chain is 3-isopropylmalate dehydratase large subunit, found in Pseudomonas putida (strain GB-1).